Here is a 263-residue protein sequence, read N- to C-terminus: Tryptophan synthase alpha chain (263 aa).

Catalysis depends on proton acceptor residues Glu51 and Asp62.

It belongs to the TrpA family. As to quaternary structure, tetramer of two alpha and two beta chains.

The enzyme catalyses (1S,2R)-1-C-(indol-3-yl)glycerol 3-phosphate + L-serine = D-glyceraldehyde 3-phosphate + L-tryptophan + H2O. The protein operates within amino-acid biosynthesis; L-tryptophan biosynthesis; L-tryptophan from chorismate: step 5/5. In terms of biological role, the alpha subunit is responsible for the aldol cleavage of indoleglycerol phosphate to indole and glyceraldehyde 3-phosphate. This Methanosarcina barkeri (strain Fusaro / DSM 804) protein is Tryptophan synthase alpha chain.